The chain runs to 434 residues: Alpha-enolase (434 aa).

Ser40 contributes to the Mg(2+) binding site. Substrate contacts are provided by His158 and Glu167. Residue Glu210 is the Proton donor of the active site. Asp245, Glu293, and Asp318 together coordinate Mg(2+). Residues Glu293 and Asp318 each coordinate substrate. Lys343 (proton acceptor) is an active-site residue. Substrate is bound by residues 370–373 (SHRS) and Lys394.

This sequence belongs to the enolase family. Homodimer. It depends on Mg(2+) as a cofactor.

Its subcellular location is the cytoplasm. It catalyses the reaction (2R)-2-phosphoglycerate = phosphoenolpyruvate + H2O. It functions in the pathway carbohydrate degradation; glycolysis; pyruvate from D-glyceraldehyde 3-phosphate: step 4/5. This Alligator mississippiensis (American alligator) protein is Alpha-enolase.